Reading from the N-terminus, the 220-residue chain is Carbonic anhydrase (220 aa).

Zn(2+) contacts are provided by cysteine 39, aspartate 41, histidine 98, and cysteine 101.

The protein belongs to the beta-class carbonic anhydrase family. It depends on Zn(2+) as a cofactor.

The catalysed reaction is hydrogencarbonate + H(+) = CO2 + H2O. The chain is Carbonic anhydrase (cynT) from Pseudomonas aeruginosa (strain ATCC 15692 / DSM 22644 / CIP 104116 / JCM 14847 / LMG 12228 / 1C / PRS 101 / PAO1).